Consider the following 367-residue polypeptide: tRNA (guanine(26)-N(2))-dimethyltransferase (367 aa).

The Trm1 methyltransferase domain maps to 1-365 (MRVSEGRVTV…ADVVEIREAT (365 aa)). Positions 34, 64, 79, 105, and 106 each coordinate S-adenosyl-L-methionine. Residues Cys-234, Cys-237, Cys-254, and Cys-257 each contribute to the Zn(2+) site.

This sequence belongs to the class I-like SAM-binding methyltransferase superfamily. Trm1 family.

It catalyses the reaction guanosine(26) in tRNA + 2 S-adenosyl-L-methionine = N(2)-dimethylguanosine(26) in tRNA + 2 S-adenosyl-L-homocysteine + 2 H(+). Its function is as follows. Dimethylates a single guanine residue at position 26 of a number of tRNAs using S-adenosyl-L-methionine as donor of the methyl groups. The protein is tRNA (guanine(26)-N(2))-dimethyltransferase of Haloarcula marismortui (strain ATCC 43049 / DSM 3752 / JCM 8966 / VKM B-1809) (Halobacterium marismortui).